A 353-amino-acid chain; its full sequence is Photosystem II protein D1 (353 aa).

Residue Thr2 is modified to N-acetylthreonine. Thr2 is subject to Phosphothreonine. 3 consecutive transmembrane segments (helical) span residues 29-46 (YIGW…TATS), 118-133 (HFFI…EWEL), and 142-156 (WIAV…AATA). His118 is a chlorophyll a binding site. Residue Tyr126 coordinates pheophytin a. Residues Asp170 and Glu189 each coordinate [CaMn4O5] cluster. A helical transmembrane segment spans residues 197–218 (FHMLGVAGVFGGSLFSAMHGSL). His198 lines the chlorophyll a pocket. A quinone is bound by residues His215 and 264 to 265 (SF). Residue His215 coordinates Fe cation. His272 contributes to the Fe cation binding site. The helical transmembrane segment at 274–288 (FLAIWPVVGIWFTAL) threads the bilayer. 4 residues coordinate [CaMn4O5] cluster: His332, Glu333, Asp342, and Ala344. Positions 345–353 (SVEAPSING) are excised as a propeptide.

The protein belongs to the reaction center PufL/M/PsbA/D family. In terms of assembly, PSII is composed of 1 copy each of membrane proteins PsbA, PsbB, PsbC, PsbD, PsbE, PsbF, PsbH, PsbI, PsbJ, PsbK, PsbL, PsbM, PsbT, PsbX, PsbY, PsbZ, Psb30/Ycf12, at least 3 peripheral proteins of the oxygen-evolving complex and a large number of cofactors. It forms dimeric complexes. The D1/D2 heterodimer binds P680, chlorophylls that are the primary electron donor of PSII, and subsequent electron acceptors. It shares a non-heme iron and each subunit binds pheophytin, quinone, additional chlorophylls, carotenoids and lipids. D1 provides most of the ligands for the Mn4-Ca-O5 cluster of the oxygen-evolving complex (OEC). There is also a Cl(-1) ion associated with D1 and D2, which is required for oxygen evolution. The PSII complex binds additional chlorophylls, carotenoids and specific lipids. is required as a cofactor. Tyr-161 forms a radical intermediate that is referred to as redox-active TyrZ, YZ or Y-Z. Post-translationally, C-terminally processed by CTPA; processing is essential to allow assembly of the oxygen-evolving complex and thus photosynthetic growth.

The protein localises to the plastid. It is found in the chloroplast thylakoid membrane. It carries out the reaction 2 a plastoquinone + 4 hnu + 2 H2O = 2 a plastoquinol + O2. In terms of biological role, photosystem II (PSII) is a light-driven water:plastoquinone oxidoreductase that uses light energy to abstract electrons from H(2)O, generating O(2) and a proton gradient subsequently used for ATP formation. It consists of a core antenna complex that captures photons, and an electron transfer chain that converts photonic excitation into a charge separation. The D1/D2 (PsbA/PsbD) reaction center heterodimer binds P680, the primary electron donor of PSII as well as several subsequent electron acceptors. The protein is Photosystem II protein D1 of Stigeoclonium helveticum (Green alga).